The chain runs to 151 residues: Protein PLANT CADMIUM RESISTANCE 1 (151 aa).

Helical transmembrane passes span I31–V47 and C54–G71.

Belongs to the cornifelin family. In terms of assembly, homopentamer. In terms of tissue distribution, expressed in aerial part, but not in roots. Detected in the guard and mesophyll cells.

The protein resides in the cell membrane. Involved in glutathione-independent cadmium resistance. Reduces cadmium uptake rather than activating efflux, but is not closely coupled to calcium transporter. This is Protein PLANT CADMIUM RESISTANCE 1 (PCR1) from Arabidopsis thaliana (Mouse-ear cress).